Reading from the N-terminus, the 92-residue chain is Small ribosomal subunit protein uS19c (92 aa).

The protein belongs to the universal ribosomal protein uS19 family.

Its subcellular location is the plastid. It is found in the chloroplast. Protein S19 forms a complex with S13 that binds strongly to the 16S ribosomal RNA. The protein is Small ribosomal subunit protein uS19c of Oltmannsiellopsis viridis (Marine flagellate).